Reading from the N-terminus, the 179-residue chain is ATP synthase subunit b (179 aa).

The helical transmembrane segment at phenylalanine 26–proline 46 threads the bilayer.

This sequence belongs to the ATPase B chain family. As to quaternary structure, F-type ATPases have 2 components, F(1) - the catalytic core - and F(0) - the membrane proton channel. F(1) has five subunits: alpha(3), beta(3), gamma(1), delta(1), epsilon(1). F(0) has four main subunits: a(1), b(1), b'(1) and c(10-14). The alpha and beta chains form an alternating ring which encloses part of the gamma chain. F(1) is attached to F(0) by a central stalk formed by the gamma and epsilon chains, while a peripheral stalk is formed by the delta, b and b' chains.

Its subcellular location is the cellular thylakoid membrane. Functionally, f(1)F(0) ATP synthase produces ATP from ADP in the presence of a proton or sodium gradient. F-type ATPases consist of two structural domains, F(1) containing the extramembraneous catalytic core and F(0) containing the membrane proton channel, linked together by a central stalk and a peripheral stalk. During catalysis, ATP synthesis in the catalytic domain of F(1) is coupled via a rotary mechanism of the central stalk subunits to proton translocation. In terms of biological role, component of the F(0) channel, it forms part of the peripheral stalk, linking F(1) to F(0). The chain is ATP synthase subunit b from Synechocystis sp. (strain ATCC 27184 / PCC 6803 / Kazusa).